Reading from the N-terminus, the 717-residue chain is Acetone carboxylase beta subunit (717 aa).

Heterohexamer of two alpha, two beta and two gamma subunits. It depends on Fe cation as a cofactor. The cofactor is Mg(2+). Requires Zn(2+) as cofactor. In terms of processing, the N-terminus is blocked.

It catalyses the reaction acetone + hydrogencarbonate + 2 ATP + 3 H2O = acetoacetate + 2 AMP + 4 phosphate + 4 H(+). Functionally, catalyzes the carboxylation of acetone to form acetoacetate. Has a reduced activity on butanone, and no activity on 2-pentatone, 3-pentatone, 2-hexanone, chloroacetone, pyruvate, phosphoenolpyruvate, acetaldehyde, propionaldehyde and propylene oxide. The sequence is that of Acetone carboxylase beta subunit from Xanthobacter autotrophicus (strain ATCC BAA-1158 / Py2).